A 255-amino-acid polypeptide reads, in one-letter code: uncharacterized protein (255 aa).

It belongs to the methyltransferase superfamily.

This is an uncharacterized protein from Mycolicibacterium gilvum (strain PYR-GCK) (Mycobacterium gilvum (strain PYR-GCK)).